The primary structure comprises 433 residues: ATP-dependent protease ATPase subunit HslU (433 aa).

ATP contacts are provided by residues valine 18, 60 to 65 (GVGKTE), aspartate 246, glutamate 311, and arginine 383.

Belongs to the ClpX chaperone family. HslU subfamily. In terms of assembly, a double ring-shaped homohexamer of HslV is capped on each side by a ring-shaped HslU homohexamer. The assembly of the HslU/HslV complex is dependent on binding of ATP.

Its subcellular location is the cytoplasm. Its function is as follows. ATPase subunit of a proteasome-like degradation complex; this subunit has chaperone activity. The binding of ATP and its subsequent hydrolysis by HslU are essential for unfolding of protein substrates subsequently hydrolyzed by HslV. HslU recognizes the N-terminal part of its protein substrates and unfolds these before they are guided to HslV for hydrolysis. The protein is ATP-dependent protease ATPase subunit HslU of Rhodopseudomonas palustris (strain HaA2).